We begin with the raw amino-acid sequence, 451 residues long: Pre-mRNA-splicing factor PRP46 (451 aa).

WD repeat units follow at residues 137-168, 180-210, 222-252, 264-294, 306-335, 348-377, and 397-427; these read GHLGWVRCVAIDPVDNEWFITGSNDTTMKVWD, GHVMTVRDVAVSDRHPYLFSVSEDKTVKCWD, GHLSGVRTVSIHPTLDLIATAGRDSVIKLWD, GHKGPINQVQCTPVDPQVVSSSTDATVRLWD, HHKRSVRATALHPKEFSVASACTDDIRSWG, EKTGIINTLSINQDDVLFAGGDNGVLSFYD, and EGERSVLCSTFDKTGLRLITGEADKSIKIWK.

The protein belongs to the WD repeat PRL1/PRL2 family. In terms of assembly, belongs to the CWC complex (or CEF1-associated complex), a spliceosome subcomplex composed of the U2, U5 and U6 snRNAs and at least BUD13, BUD31, BRR2, CDC40, CEF1, CLF1, CUS1, CWC2, CWC15, CWC21, CWC22, CWC23, CWC24, CWC25, CWC27, ECM2, HSH155, IST3, ISY1, LEA1, MSL1, NTC20, PRP8, PRP9, PRP11, PRP19, PRP21, PRP22, PRP45, PRP46, SLU7, SMB1, SMD1, SMD2, SMD3, SMX2, SMX3, SNT309, SNU114, SPP2, SYF1, SYF2, RSE1 and YJU2. Interacts with CEF1, CLF1, NTC20, PRP45 and SYF1.

Its subcellular location is the cytoplasm. The protein resides in the nucleus. Functionally, involved in pre-mRNA splicing. May also be required for cell cycle progression at G2/M. In Saccharomyces cerevisiae (strain ATCC 204508 / S288c) (Baker's yeast), this protein is Pre-mRNA-splicing factor PRP46 (PRP46).